The sequence spans 406 residues: Mitochondrial ribosome-associated GTPase 2 (406 aa).

A localized in the mitochondria region spans residues 15–406 (FQGVGHWALS…LGQGRQPLRW (392 aa)). The tract at residues 30–406 (KPSRLLPQRA…LGQGRQPLRW (377 aa)) is not localized in the mitochondria. In terms of domain architecture, Obg spans 70–224 (RYFVDYRRVL…RVLHLELKTV (155 aa)). An OBG-type G domain is found at 225-390 (AHAGMVGFPN…LLLHLKVLYD (166 aa)). Residues 231–238 (GFPNAGKS), 256–260 (FTTLK), 278–281 (DIPG), 345–348 (NKID), and 371–373 (SAL) each bind GTP. The Mg(2+) site is built by S238 and T258.

This sequence belongs to the TRAFAC class OBG-HflX-like GTPase superfamily. OBG GTPase family. Associates with the mitochondrial ribosome large subunit; the association occurs in a GTP-dependent manner. Mg(2+) is required as a cofactor.

It is found in the mitochondrion. The protein localises to the mitochondrion inner membrane. Functionally, plays a role in the regulation of the mitochondrial ribosome assembly and of translational activity. Displays GTPase activity. Involved in the ribosome maturation process. The polypeptide is Mitochondrial ribosome-associated GTPase 2 (MTG2) (Homo sapiens (Human)).